Here is a 286-residue protein sequence, read N- to C-terminus: Homoserine kinase (286 aa).

Position 78–88 (78–88) interacts with ATP; sequence PLARGLGSSSS.

It belongs to the GHMP kinase family. Homoserine kinase subfamily.

The protein resides in the cytoplasm. The enzyme catalyses L-homoserine + ATP = O-phospho-L-homoserine + ADP + H(+). It participates in amino-acid biosynthesis; L-threonine biosynthesis; L-threonine from L-aspartate: step 4/5. Its function is as follows. Catalyzes the ATP-dependent phosphorylation of L-homoserine to L-homoserine phosphate. This is Homoserine kinase from Streptococcus thermophilus (strain CNRZ 1066).